The following is a 328-amino-acid chain: Methionyl-tRNA formyltransferase (328 aa).

110 to 113 (SLLP) lines the (6S)-5,6,7,8-tetrahydrofolate pocket.

It belongs to the Fmt family.

The catalysed reaction is L-methionyl-tRNA(fMet) + (6R)-10-formyltetrahydrofolate = N-formyl-L-methionyl-tRNA(fMet) + (6S)-5,6,7,8-tetrahydrofolate + H(+). Attaches a formyl group to the free amino group of methionyl-tRNA(fMet). The formyl group appears to play a dual role in the initiator identity of N-formylmethionyl-tRNA by promoting its recognition by IF2 and preventing the misappropriation of this tRNA by the elongation apparatus. The polypeptide is Methionyl-tRNA formyltransferase (Prochlorococcus marinus (strain MIT 9312)).